Consider the following 861-residue polypeptide: DNA mismatch repair protein MutS (861 aa).

618–625 (GPNMGGKS) is a binding site for ATP.

This sequence belongs to the DNA mismatch repair MutS family.

Functionally, this protein is involved in the repair of mismatches in DNA. It is possible that it carries out the mismatch recognition step. This protein has a weak ATPase activity. This is DNA mismatch repair protein MutS from Shewanella frigidimarina (strain NCIMB 400).